Here is a 712-residue protein sequence, read N- to C-terminus: Ribosome-releasing factor 2, mitochondrial (712 aa).

The N-terminal 28 residues, 1-28, are a transit peptide targeting the mitochondrion; the sequence is MQYSLLSAQLRCSRFLLRQQAPFINRCY. A tr-type G domain is found at 30–309; the sequence is DDIRNIGILA…AVNAYLPTPN (280 aa). Residues 39 to 46, 103 to 107, and 157 to 160 each bind GTP; these read AHIDAGKT, DTPGH, and NKMD.

Belongs to the TRAFAC class translation factor GTPase superfamily. Classic translation factor GTPase family. EF-G/EF-2 subfamily.

Its subcellular location is the mitochondrion. Its function is as follows. Mitochondrial GTPase that mediates the disassembly of ribosomes from messenger RNA at the termination of mitochondrial protein biosynthesis. Not involved in the GTP-dependent ribosomal translocation step during translation elongation. This chain is Ribosome-releasing factor 2, mitochondrial, found in Drosophila virilis (Fruit fly).